Consider the following 560-residue polypeptide: N-acetylglucosamine-6-sulfatase (560 aa).

The segment at 1 to 25 (MRLLSLAPDRPRRGGPRHLTSGSPA) is disordered. The signal sequence occupies residues 1–48 (MRLLSLAPDRPRRGGPRHLTSGSPALPPPPPLLLLLLLLGGCLGVSGA). 3 residues coordinate Ca(2+): Asp63, Asp64, and Cys99. Cys99 functions as the Nucleophile in the catalytic mechanism. Cys99 carries the post-translational modification 3-oxoalanine (Cys). 7 N-linked (GlcNAc...) asparagine glycosylation sites follow: Asn119, Asn125, Asn191, Asn206, Asn218, Asn287, and Asn325. Asp334 and Asn335 together coordinate Ca(2+). Asn370, Asn395, Asn413, Asn430, Asn457, and Asn488 each carry an N-linked (GlcNAc...) asparagine glycan. Position 549 is a phosphoserine (Ser549).

This sequence belongs to the sulfatase family. Ca(2+) is required as a cofactor. The conversion to 3-oxoalanine (also known as C-formylglycine, FGly), of a serine or cysteine residue in prokaryotes and of a cysteine residue in eukaryotes, is critical for catalytic activity.

The protein localises to the lysosome. The catalysed reaction is Hydrolysis of the 6-sulfate groups of the N-acetyl-D-glucosamine 6-sulfate units of heparan sulfate and keratan sulfate.. In terms of biological role, hydrolyzes 6-sulfate groups in N-acetyl-d-glucosaminide units of heparin sulfate and keratan sulfate. The sequence is that of N-acetylglucosamine-6-sulfatase (GNS) from Bos taurus (Bovine).